The following is a 467-amino-acid chain: Glutamyl-tRNA(Gln) amidotransferase subunit A (467 aa).

Residues Lys-57 and Ser-132 each act as charge relay system in the active site. The active-site Acyl-ester intermediate is Ser-156.

It belongs to the amidase family. GatA subfamily. As to quaternary structure, heterotrimer of A, B and C subunits.

It catalyses the reaction L-glutamyl-tRNA(Gln) + L-glutamine + ATP + H2O = L-glutaminyl-tRNA(Gln) + L-glutamate + ADP + phosphate + H(+). Its function is as follows. Allows the formation of correctly charged Gln-tRNA(Gln) through the transamidation of misacylated Glu-tRNA(Gln) in organisms which lack glutaminyl-tRNA synthetase. The reaction takes place in the presence of glutamine and ATP through an activated gamma-phospho-Glu-tRNA(Gln). The protein is Glutamyl-tRNA(Gln) amidotransferase subunit A of Pseudothermotoga lettingae (strain ATCC BAA-301 / DSM 14385 / NBRC 107922 / TMO) (Thermotoga lettingae).